A 195-amino-acid polypeptide reads, in one-letter code: Protein GrpE (195 aa).

The protein belongs to the GrpE family. In terms of assembly, homodimer.

Its subcellular location is the cytoplasm. Participates actively in the response to hyperosmotic and heat shock by preventing the aggregation of stress-denatured proteins, in association with DnaK and GrpE. It is the nucleotide exchange factor for DnaK and may function as a thermosensor. Unfolded proteins bind initially to DnaJ; upon interaction with the DnaJ-bound protein, DnaK hydrolyzes its bound ATP, resulting in the formation of a stable complex. GrpE releases ADP from DnaK; ATP binding to DnaK triggers the release of the substrate protein, thus completing the reaction cycle. Several rounds of ATP-dependent interactions between DnaJ, DnaK and GrpE are required for fully efficient folding. The chain is Protein GrpE from Blochmanniella pennsylvanica (strain BPEN).